Consider the following 61-residue polypeptide: Small ribosomal subunit protein uS14 (61 aa).

Positions 24, 27, 40, and 43 each coordinate Zn(2+).

This sequence belongs to the universal ribosomal protein uS14 family. Zinc-binding uS14 subfamily. Part of the 30S ribosomal subunit. Contacts proteins S3 and S10. Zn(2+) serves as cofactor.

Binds 16S rRNA, required for the assembly of 30S particles and may also be responsible for determining the conformation of the 16S rRNA at the A site. In Natranaerobius thermophilus (strain ATCC BAA-1301 / DSM 18059 / JW/NM-WN-LF), this protein is Small ribosomal subunit protein uS14.